The following is a 508-amino-acid chain: Maturase K (508 aa).

It belongs to the intron maturase 2 family. MatK subfamily.

The protein localises to the plastid. It localises to the chloroplast. Usually encoded in the trnK tRNA gene intron. Probably assists in splicing its own and other chloroplast group II introns. In Manilkara zapota (Sapodilla plum), this protein is Maturase K.